A 103-amino-acid polypeptide reads, in one-letter code: MVYVYAIVYRDKDGFTAPVPLDEHRPAVFFEWKIADKVFTTLKEQYRLALGKGIPRLVETPRKFWFNKIEVKHVKPDVDTQRLYQRILDTGRIVSIPIAGNLR.

This is an uncharacterized protein from Enterobacteria phage T4 (Bacteriophage T4).